Here is an 860-residue protein sequence, read N- to C-terminus: Leucine--tRNA ligase (860 aa).

A 'HIGH' region motif is present at residues 42 to 52 (PYPSGRLHMGH). The short motif at 619–623 (KMSKS) is the 'KMSKS' region element. ATP is bound at residue lysine 622.

This sequence belongs to the class-I aminoacyl-tRNA synthetase family.

The protein localises to the cytoplasm. It carries out the reaction tRNA(Leu) + L-leucine + ATP = L-leucyl-tRNA(Leu) + AMP + diphosphate. This chain is Leucine--tRNA ligase, found in Salmonella typhimurium (strain LT2 / SGSC1412 / ATCC 700720).